The chain runs to 603 residues: Elongation factor 4 (603 aa).

In terms of domain architecture, tr-type G spans 2-184; the sequence is NHIRNFSIIA…AVIARVPPPK (183 aa). GTP-binding positions include 14–19 and 131–134; these read DHGKST and NKMD.

This sequence belongs to the TRAFAC class translation factor GTPase superfamily. Classic translation factor GTPase family. LepA subfamily.

It localises to the cell inner membrane. It catalyses the reaction GTP + H2O = GDP + phosphate + H(+). Required for accurate and efficient protein synthesis under certain stress conditions. May act as a fidelity factor of the translation reaction, by catalyzing a one-codon backward translocation of tRNAs on improperly translocated ribosomes. Back-translocation proceeds from a post-translocation (POST) complex to a pre-translocation (PRE) complex, thus giving elongation factor G a second chance to translocate the tRNAs correctly. Binds to ribosomes in a GTP-dependent manner. This Polaromonas sp. (strain JS666 / ATCC BAA-500) protein is Elongation factor 4.